A 610-amino-acid polypeptide reads, in one-letter code: Sterol O-acyltransferase 1 (610 aa).

Residues S21 and S45 each carry the phosphoserine modification. A disordered region spans residues 41–81 (SMEVSPRSSTTSLVEPVESTEGVESTEAERVAGKQEQEEEY). The segment covering 67–76 (EAERVAGKQE) has biased composition (basic and acidic residues). 5 consecutive transmembrane segments (helical) span residues 182–202 (LESN…WIAI), 229–249 (LFTI…VVFV), 264–284 (GFVA…PIYV), 371–391 (ISCS…QINY), and 409–429 (IIGT…PVAM). Residues 491–497 (FYGDWWN) carry the FYXDWWN motif motif. A run of 2 helical transmembrane segments spans residues 535–555 (ATLF…FAIF) and 590–610 (VVFS…YLTL). The active site involves H547.

Belongs to the membrane-bound acyltransferase family. Sterol o-acyltransferase subfamily.

It is found in the endoplasmic reticulum membrane. The catalysed reaction is lanosterol + an acyl-CoA = lanosteryl ester + CoA. Its function is as follows. Sterol O-acyltransferase that catalyzes the formation of stery esters. This Saccharomyces cerevisiae (strain ATCC 204508 / S288c) (Baker's yeast) protein is Sterol O-acyltransferase 1.